Here is a 104-residue protein sequence, read N- to C-terminus: Large ribosomal subunit protein uL24 (104 aa).

The protein belongs to the universal ribosomal protein uL24 family. In terms of assembly, part of the 50S ribosomal subunit.

In terms of biological role, one of two assembly initiator proteins, it binds directly to the 5'-end of the 23S rRNA, where it nucleates assembly of the 50S subunit. Functionally, one of the proteins that surrounds the polypeptide exit tunnel on the outside of the subunit. In Ectopseudomonas mendocina (strain ymp) (Pseudomonas mendocina), this protein is Large ribosomal subunit protein uL24.